We begin with the raw amino-acid sequence, 1056 residues long: Pleckstrin homology domain-containing family M member 1 (1056 aa).

One can recognise an RUN domain in the interval 41 to 183; it reads TSEDGDANTM…LSFELSYKSA (143 aa). 3 disordered regions span residues 215 to 245, 277 to 303, and 360 to 422; these read QRKE…RRNQ, GSKS…EDSD, and PAQA…QAHD. Ser-219 bears the Phosphoserine mark. Residues 389 to 404 show a composition bias toward polar residues; that stretch reads PVESTSGQQPSSTVSE. Phosphoserine is present on residues Ser-432 and Ser-435. The disordered stretch occupies residues 451 to 483; it reads SREQPLESASDHPIASYRGTPGSRPGLHRHFSQ. At Ser-490 the chain carries Phosphoserine. Residues 534 to 625 form the PH 1 domain; that stretch reads GLMKLGTVER…WLDRVREALQ (92 aa). Positions 632–638 match the LIR motif; it reads EDEWVNV. Residues 654 to 1056 are interaction with RAB7A; sequence CLSPSDLLSE…RKYQEQNIFA (403 aa). The 95-residue stretch at 683–777 folds into the PH 2 domain; that stretch reads DAIKESLLYL…WRDLVRKVLA (95 aa). The Phorbol-ester/DAG-type zinc finger occupies 986 to 1040; sequence QHVYHCDLCTQRGFICQICQHHDIIFPFEFDTTVRCAECKTVFHQSCQAVVKKGC.

As to quaternary structure, interacts (via N- and C-terminus) with RAB7A (GTP-bound form). Simultaneously interacts with RAB7A and ARL8B; bringing about clustering and fusion of late endosomes and lysosomes. Interacts (via RUN domain) with ARL8B (GTP-bound form); the interaction is required for PLEKHM1 localization to lysosomes and for ARL8B function in delivery and degradation of endocytic and autophagic cargo in lysosomes. PLEKHM1 and PLEKHM2 compete for interaction with ARL8B. Interacts with ARL8A; the interaction is weaker than with ARL8B. Interacts with VPS41, VPS11, VPS18, VPS33A and VPS39; indicative for an association with the HOPS complex; the interactions with, at least, VPS41, VPS11, VPS18 and VPS33A require ARL8B. Interacts with GABARAP, GABARAPL, GABARAPL2, MAP1LC3A, MAP1LC3B and MAP1LC3C. Interacts with PAFAH1B. Interacts (via N- and C-terminus) with NDEL1. Interacts (via C-terminus) with MAP3K7. Interacts (via N- and C-terminus) with FAM98A. Interacts (via C-terminus) with DEF8; this interaction is weak but increased in a RAB7A-dependent manner. In colon carcinoma and breast carcinoma cells, it interacts with sialyl-lex-positive protein. (Microbial infection) Interacts with Salmonella typhimurium sifA. As to expression, expressed in placenta, liver, prostate, thymus, spleen, ovary, colon, colon carcinoma and peripheral blood lymphocytes (PBL). Weakly expressed in brain, lung, kidney, and testis. No expression in heart, skeletal muscle, pancreas and small intestine. Predominantly expressed in the breast carcinoma cell line MCF-7.

The protein localises to the autolysosome membrane. The protein resides in the endosome membrane. It localises to the late endosome membrane. Its subcellular location is the lysosome membrane. Its function is as follows. Acts as a multivalent adapter protein that regulates Rab7-dependent and HOPS complex-dependent fusion events in the endolysosomal system and couples autophagic and the endocytic trafficking pathways. Acts as a dual effector of RAB7A and ARL8B that simultaneously binds these GTPases, bringing about clustering and fusion of late endosomes and lysosomes. Required for late stages of endolysosomal maturation, facilitating both endocytosis-mediated degradation of growth factor receptors and autophagosome clearance. Interaction with Arl8b is a crucial factor in the terminal maturation of autophagosomes and to mediate autophagosome-lysosome fusion. Positively regulates lysosome peripheral distribution and ruffled border formation in osteoclasts. May be involved in negative regulation of endocytic transport from early endosome to late endosome/lysosome implicating its association with Rab7. May have a role in sialyl-lex-mediated transduction of apoptotic signals. Involved in bone resorption. Functionally, (Microbial infection) In case of infection contributes to Salmonella typhimurium pathogenesis by supporting the integrity of the Salmonella-containing vacuole (SCV) probably in concert with the HOPS complex and Rab7. This is Pleckstrin homology domain-containing family M member 1 from Homo sapiens (Human).